Here is a 478-residue protein sequence, read N- to C-terminus: Cytochrome c-552 (478 aa).

Positions 1 to 26 (MARKTLRARRFFSLIFPFFFITSVYA) are cleaved as a signal peptide. His94 lines the heme c pocket. 3 residues coordinate heme: Cys122, Cys125, and Lys126. Heme c-binding residues include Cys160, Cys163, His164, Cys209, Cys212, and His213. 4 residues coordinate Ca(2+): Glu215, Tyr216, Lys261, and Gln263. Position 216 (Tyr216) interacts with substrate. His264 contacts substrate. Positions 275, 282, 285, 286, 301, 314, 317, 318, and 393 each coordinate heme c.

This sequence belongs to the cytochrome c-552 family. Ca(2+) serves as cofactor. It depends on heme c as a cofactor.

It localises to the periplasm. The enzyme catalyses 6 Fe(III)-[cytochrome c] + NH4(+) + 2 H2O = 6 Fe(II)-[cytochrome c] + nitrite + 8 H(+). It participates in nitrogen metabolism; nitrate reduction (assimilation). Functionally, catalyzes the reduction of nitrite to ammonia, consuming six electrons in the process. The sequence is that of Cytochrome c-552 from Salmonella schwarzengrund (strain CVM19633).